The sequence spans 508 residues: Pyruvate kinase, cytosolic isozyme (508 aa).

Substrate is bound at residue Arg48. Residues Asn50, Ser52, Asp82, and Thr83 each coordinate K(+). 50–53 (NFSH) provides a ligand contact to ATP. Residues Arg89 and Lys174 each coordinate ATP. Glu240 is a binding site for Mg(2+). Positions 263, 264, and 296 each coordinate substrate. Mg(2+) is bound at residue Asp264.

Belongs to the pyruvate kinase family. Homotetramer. The cofactor is Mg(2+). K(+) is required as a cofactor.

It is found in the cytoplasm. The catalysed reaction is pyruvate + ATP = phosphoenolpyruvate + ADP + H(+). The protein operates within carbohydrate degradation; glycolysis; pyruvate from D-glyceraldehyde 3-phosphate: step 5/5. This Nicotiana tabacum (Common tobacco) protein is Pyruvate kinase, cytosolic isozyme.